Reading from the N-terminus, the 333-residue chain is NADH-quinone oxidoreductase subunit H (333 aa).

8 helical membrane-spanning segments follow: residues 15–35 (LVIF…FVTY), 88–108 (FILA…TLPF), 117–137 (IGVG…GVVA), 159–179 (ISYE…TGSL), 191–211 (VWYI…AVAE), 250–270 (LFAM…PVMF), 273–293 (FIPG…VLIW), and 313–333 (VLFP…ELFF).

It belongs to the complex I subunit 1 family. As to quaternary structure, NDH-1 is composed of 14 different subunits. Subunits NuoA, H, J, K, L, M, N constitute the membrane sector of the complex.

It localises to the cell membrane. The catalysed reaction is a quinone + NADH + 5 H(+)(in) = a quinol + NAD(+) + 4 H(+)(out). Functionally, NDH-1 shuttles electrons from NADH, via FMN and iron-sulfur (Fe-S) centers, to quinones in the respiratory chain. The immediate electron acceptor for the enzyme in this species is believed to be ubiquinone. Couples the redox reaction to proton translocation (for every two electrons transferred, four hydrogen ions are translocated across the cytoplasmic membrane), and thus conserves the redox energy in a proton gradient. This subunit may bind ubiquinone. The protein is NADH-quinone oxidoreductase subunit H of Geobacillus sp. (strain WCH70).